The primary structure comprises 489 residues: MITLRNISFSYNGTKENNLCDISLHIPKGQCVLLCGASGCGKTTLTRLINGLIPHFFEGEFSGEAIINGMNSEEADIAQLSDSVGTVFQNPRTQFFNTDTDSEIVFGLENRGLPPEQLLSRLEKVTEDLQIQNLRERSIFELSGGEKQKIAFASVYAAAPDIFVLDEPSSNMDYHSIKELSELIKKIKLQGKTIIIAEHRIWYLMDIADRVIFMENGKIAHDMDIKTFVDLPEAQIKSMKLRCRNLADVKAETVNVSPDVSVSFGGHTFAVKDITVKLGHTSVLQDISFSTTGGEIIAITGENGAGKTTLARTLCGLTQEAAGSISFDGNPLSRKMRRERSYMVMQDVGHQLFTDSVYAECRLGIKDLPDPAIDEVLTELSLNRLKERHPLSLSGGQKQRLAVAVSVLCGKDILIFDEPTSGLDLKSMQEAGRIIKRLADDKKTVIVITHDIEFIKTICSRVLILSGGKIVKELCGEKKNELEMQLETF.

ABC transporter domains lie at 2 to 241 (ITLR…SMKL) and 269 to 487 (FAVK…MQLE). ATP contacts are provided by residues 36–43 (GASGCGKT) and 301–308 (GENGAGKT).

This sequence belongs to the ABC transporter superfamily.

Its subcellular location is the cell inner membrane. Its function is as follows. Probably part of an ABC transporter complex. Responsible for energy coupling to the transport system. This is Putative ABC transporter ATP-binding protein TDE_0282 from Treponema denticola (strain ATCC 35405 / DSM 14222 / CIP 103919 / JCM 8153 / KCTC 15104).